We begin with the raw amino-acid sequence, 358 residues long: uncharacterized protein (358 aa).

The interval 1–47 is disordered; that stretch reads MGNVAGETRANVIPLHTNRSRVAARRRAGQRAESRQHPSLLSDPNDR. Over residues 18-29 the composition is skewed to basic residues; it reads NRSRVAARRRAG.

The protein to M.leprae ML2427.

This is an uncharacterized protein from Mycobacterium tuberculosis (strain CDC 1551 / Oshkosh).